The primary structure comprises 458 residues: ATP synthase subunit beta (458 aa).

148 to 155 (GGAGVGKT) is a binding site for ATP.

Belongs to the ATPase alpha/beta chains family. In terms of assembly, F-type ATPases have 2 components, CF(1) - the catalytic core - and CF(0) - the membrane proton channel. CF(1) has five subunits: alpha(3), beta(3), gamma(1), delta(1), epsilon(1). CF(0) has three main subunits: a(1), b(2) and c(9-12). The alpha and beta chains form an alternating ring which encloses part of the gamma chain. CF(1) is attached to CF(0) by a central stalk formed by the gamma and epsilon chains, while a peripheral stalk is formed by the delta and b chains.

Its subcellular location is the cell inner membrane. The enzyme catalyses ATP + H2O + 4 H(+)(in) = ADP + phosphate + 5 H(+)(out). Produces ATP from ADP in the presence of a proton gradient across the membrane. The catalytic sites are hosted primarily by the beta subunits. The sequence is that of ATP synthase subunit beta from Pseudomonas putida (strain W619).